Here is a 285-residue protein sequence, read N- to C-terminus: Probable endonuclease 4 (285 aa).

Residues His-67, His-107, Glu-144, Asp-178, His-181, His-215, Asp-228, His-230, and Glu-260 each coordinate Zn(2+).

It belongs to the AP endonuclease 2 family. Requires Zn(2+) as cofactor.

It catalyses the reaction Endonucleolytic cleavage to 5'-phosphooligonucleotide end-products.. Endonuclease IV plays a role in DNA repair. It cleaves phosphodiester bonds at apurinic or apyrimidinic (AP) sites, generating a 3'-hydroxyl group and a 5'-terminal sugar phosphate. The sequence is that of Probable endonuclease 4 from Chloroflexus aurantiacus (strain ATCC 29366 / DSM 635 / J-10-fl).